The primary structure comprises 343 residues: Uroporphyrinogen decarboxylase (343 aa).

Substrate-binding positions include Arg24–Arg28, Phe43, Asp74, Tyr151, Ser206, and His321.

Belongs to the uroporphyrinogen decarboxylase family. As to quaternary structure, homodimer.

The protein localises to the cytoplasm. The catalysed reaction is uroporphyrinogen III + 4 H(+) = coproporphyrinogen III + 4 CO2. It functions in the pathway porphyrin-containing compound metabolism; protoporphyrin-IX biosynthesis; coproporphyrinogen-III from 5-aminolevulinate: step 4/4. Functionally, catalyzes the decarboxylation of four acetate groups of uroporphyrinogen-III to yield coproporphyrinogen-III. This Thermosynechococcus vestitus (strain NIES-2133 / IAM M-273 / BP-1) protein is Uroporphyrinogen decarboxylase.